Reading from the N-terminus, the 411-residue chain is MADVVVGIQWGDEGKGKIVDRIAKDYDFVVRYQGGHNAGHTIVHKGVKHSLHLMPSGVLYPKCKNIISSAVVVSIKDLCEEISAFEDLENRLFISDRAHVILPYHAKKDAFKEKSQNIGTTKKGIGPCYEDKMARSGIRMGDLLDDTILEEKLNAHFKAIEPFKEAYDLGEDYEKDLREYFKQYTPKIRPFIKDTTSMLIEANQKGAKILLEGAQGTLLDIDLGTYPFVTSSNTTSASACVSTGLNPKAINEVIGITKAYSTRVGNGPFPSEDATPMGDHLRTKGAEFGTTTKRPRRCGWLDLVALKYACALNGCTQLALMKLDVLDGIDAIKVCVAYERKGERLEAFPSDLKDCVPVYQTFKGWEKSVGVRKLDDLEPNAREYIRFIEKEVGVKIRLISTSPEREDTIFL.

GTP-binding positions include 11 to 17 and 39 to 41; these read GDEGKGK and GHT. Catalysis depends on D12, which acts as the Proton acceptor. Mg(2+) contacts are provided by D12 and G39. IMP contacts are provided by residues 12 to 15, 37 to 40, T121, R135, Q215, T230, and R294; these read DEGK and NAGH. H40 serves as the catalytic Proton donor. Residue 290-296 participates in substrate binding; sequence TTTKRPR. GTP-binding positions include R296, 322–324, and 400–402; these read KLD and STS.

Belongs to the adenylosuccinate synthetase family. In terms of assembly, homodimer. Mg(2+) is required as a cofactor.

The protein localises to the cytoplasm. The enzyme catalyses IMP + L-aspartate + GTP = N(6)-(1,2-dicarboxyethyl)-AMP + GDP + phosphate + 2 H(+). It participates in purine metabolism; AMP biosynthesis via de novo pathway; AMP from IMP: step 1/2. Plays an important role in the de novo pathway of purine nucleotide biosynthesis. Catalyzes the first committed step in the biosynthesis of AMP from IMP. This is Adenylosuccinate synthetase from Helicobacter pylori (strain HPAG1).